Here is a 374-residue protein sequence, read N- to C-terminus: Chaperone protein DnaJ (374 aa).

A J domain is found at 4–69 (SYYEILEITQ…EKRAIYDRYG (66 aa)). Residues 136-213 (GCKKNIDFTY…CKGLGYNESK (78 aa)) form a CR-type zinc finger. 8 residues coordinate Zn(2+): Cys-149, Cys-152, Cys-165, Cys-168, Cys-187, Cys-190, Cys-201, and Cys-204. CXXCXGXG motif repeat units lie at residues 149-156 (CKTCNGTG), 165-172 (CPKCQGRG), 187-194 (CPDCQGSG), and 201-208 (CSDCKGLG).

This sequence belongs to the DnaJ family. Homodimer. Zn(2+) serves as cofactor.

It is found in the cytoplasm. Its function is as follows. Participates actively in the response to hyperosmotic and heat shock by preventing the aggregation of stress-denatured proteins and by disaggregating proteins, also in an autonomous, DnaK-independent fashion. Unfolded proteins bind initially to DnaJ; upon interaction with the DnaJ-bound protein, DnaK hydrolyzes its bound ATP, resulting in the formation of a stable complex. GrpE releases ADP from DnaK; ATP binding to DnaK triggers the release of the substrate protein, thus completing the reaction cycle. Several rounds of ATP-dependent interactions between DnaJ, DnaK and GrpE are required for fully efficient folding. Also involved, together with DnaK and GrpE, in the DNA replication of plasmids through activation of initiation proteins. This is Chaperone protein DnaJ from Campylobacter jejuni subsp. jejuni serotype O:6 (strain 81116 / NCTC 11828).